The primary structure comprises 100 residues: Omega-hexatoxin-Asp2a (100 aa).

Positions 1 to 23 (MKFSKLSITLAVILTQAVFVLCG) are cleaved as a signal peptide. A propeptide spanning residues 24 to 55 (MKNEDFMEKGLESNELHDAIKKPVNSGKPDTE) is cleaved from the precursor. 3 disulfides stabilise this stretch: Cys-60–Cys-73, Cys-66–Cys-79, and Cys-72–Cys-84.

It belongs to the neurotoxin 15 family. 02 (omega-actx) subfamily. In terms of tissue distribution, expressed by the venom gland.

It localises to the secreted. In terms of biological role, potent inhibitor of insect, but not mammalian, voltage-gated calcium channels (Cav). In Atrax sp. (strain Illawarra) (Funnel-web spider), this protein is Omega-hexatoxin-Asp2a.